A 242-amino-acid polypeptide reads, in one-letter code: Triosephosphate isomerase (242 aa).

Asparagine 9–lysine 11 serves as a coordination point for substrate. Histidine 99 acts as the Electrophile in catalysis. Catalysis depends on glutamate 169, which acts as the Proton acceptor. Residues glycine 175, serine 207, and glycine 228–glycine 229 contribute to the substrate site.

This sequence belongs to the triosephosphate isomerase family. In terms of assembly, homodimer.

It is found in the cytoplasm. The enzyme catalyses D-glyceraldehyde 3-phosphate = dihydroxyacetone phosphate. The protein operates within carbohydrate biosynthesis; gluconeogenesis. It functions in the pathway carbohydrate degradation; glycolysis; D-glyceraldehyde 3-phosphate from glycerone phosphate: step 1/1. In terms of biological role, involved in the gluconeogenesis. Catalyzes stereospecifically the conversion of dihydroxyacetone phosphate (DHAP) to D-glyceraldehyde-3-phosphate (G3P). This is Triosephosphate isomerase from Mycoplasma mobile (strain ATCC 43663 / 163K / NCTC 11711) (Mesomycoplasma mobile).